The primary structure comprises 89 residues: Small ribosomal subunit protein uS15 (89 aa).

It belongs to the universal ribosomal protein uS15 family. Part of the 30S ribosomal subunit. Forms a bridge to the 50S subunit in the 70S ribosome, contacting the 23S rRNA.

One of the primary rRNA binding proteins, it binds directly to 16S rRNA where it helps nucleate assembly of the platform of the 30S subunit by binding and bridging several RNA helices of the 16S rRNA. In terms of biological role, forms an intersubunit bridge (bridge B4) with the 23S rRNA of the 50S subunit in the ribosome. The chain is Small ribosomal subunit protein uS15 from Salinispora arenicola (strain CNS-205).